A 437-amino-acid polypeptide reads, in one-letter code: Enolase (437 aa).

Gln163 serves as a coordination point for (2R)-2-phosphoglycerate. Glu205 (proton donor) is an active-site residue. Mg(2+) is bound by residues Asp242, Glu285, and Asp312. (2R)-2-phosphoglycerate is bound by residues Lys337, Arg366, Ser367, and Lys388. Residue Lys337 is the Proton acceptor of the active site.

Belongs to the enolase family. Requires Mg(2+) as cofactor.

Its subcellular location is the cytoplasm. The protein resides in the secreted. It is found in the cell surface. The enzyme catalyses (2R)-2-phosphoglycerate = phosphoenolpyruvate + H2O. It participates in carbohydrate degradation; glycolysis; pyruvate from D-glyceraldehyde 3-phosphate: step 4/5. Functionally, catalyzes the reversible conversion of 2-phosphoglycerate (2-PG) into phosphoenolpyruvate (PEP). It is essential for the degradation of carbohydrates via glycolysis. In Nitratidesulfovibrio vulgaris (strain DP4) (Desulfovibrio vulgaris), this protein is Enolase.